The sequence spans 320 residues: Na(+)-translocating NADH-quinone reductase subunit C (320 aa).

The helical transmembrane segment at 16-36 (WYIVSFILGLSLFAGVLLSTI) threads the bilayer. Thr-285 is modified (FMN phosphoryl threonine).

Belongs to the NqrC family. Composed of six subunits; NqrA, NqrB, NqrC, NqrD, NqrE and NqrF. It depends on FMN as a cofactor.

Its subcellular location is the cell inner membrane. It carries out the reaction a ubiquinone + n Na(+)(in) + NADH + H(+) = a ubiquinol + n Na(+)(out) + NAD(+). Functionally, NQR complex catalyzes the reduction of ubiquinone-1 to ubiquinol by two successive reactions, coupled with the transport of Na(+) ions from the cytoplasm to the periplasm. NqrA to NqrE are probably involved in the second step, the conversion of ubisemiquinone to ubiquinol. The sequence is that of Na(+)-translocating NADH-quinone reductase subunit C from Chlamydia pneumoniae (Chlamydophila pneumoniae).